Reading from the N-terminus, the 118-residue chain is Large ribosomal subunit protein bL20 (118 aa).

The protein belongs to the bacterial ribosomal protein bL20 family.

In terms of biological role, binds directly to 23S ribosomal RNA and is necessary for the in vitro assembly process of the 50S ribosomal subunit. It is not involved in the protein synthesizing functions of that subunit. This is Large ribosomal subunit protein bL20 from Campylobacter concisus (strain 13826).